The following is a 3108-amino-acid chain: Probable polyketide synthase 39 (3108 aa).

One can recognise a Ketosynthase family 3 (KS3) domain in the interval 9 to 440; the sequence is DDDVAVIGIG…GSNVCLILSE (432 aa). Catalysis depends on for beta-ketoacyl synthase activity residues C181, H320, and H363. Residues 643 to 676 form an acyl/malonyl transferase region; that stretch reads GVSADIIIGHSLGEISSAYCSGMIDFQTLCYLTY. S653 (for acyl/malonyl transferase activity) is an active-site residue. An N-terminal hotdog fold region spans residues 939–1068; that stretch reads HEKIKSEGPS…GNFSLFKHNI (130 aa). Positions 939–1265 constitute a PKS/mFAS DH domain; the sequence is HEKIKSEGPS…CTIAASNPDS (327 aa). The Proton acceptor; for dehydratase activity role is filled by H980. A C-terminal hotdog fold region spans residues 1085-1265; the sequence is NFTSISKQDL…CTIAASNPDS (181 aa). The active-site Proton donor; for dehydratase activity is D1157. The interval 1375 to 1435 is disordered; that stretch reads NNNNNNNNNN…NNNNNNNNNN (61 aa). The Carrier domain maps to 2566–2643; the sequence is GNNEIIHSTI…QSIEIIKSAL (78 aa). S2603 carries the post-translational modification O-(pantetheine 4'-phosphoryl)serine. The helical transmembrane segment at 2702 to 2722 threads the bilayer; that stretch reads IFLTGSTGFLGAYLLMELIKM.

Pantetheine 4'-phosphate is required as a cofactor.

It localises to the membrane. In terms of biological role, probable polyketide synthase. The chain is Probable polyketide synthase 39 (pks39) from Dictyostelium discoideum (Social amoeba).